Consider the following 114-residue polypeptide: Protachykinin (114 aa).

Residues 1 to 19 (MKFLLPSIVIFLVLCQVFG) form the signal peptide. Positions 20–55 (EELGPKEDLDYWTGSNQVQDEWLQADPFREIIRRMT) are excised as a propeptide. Methionine amide is present on residues M67 and M91.

This sequence belongs to the tachykinin family. As to expression, expressed in all parts of the brain, with robust expression in the olfactory bulbs and tracts, moderate expression in the hypothalamus and posterior brain, and weak expression in the telencephalon-preoptic region and optic tectum-thalamus. Also expressed in nerve fibers, intestine, testes and pituitary gland. Not expressed in the liver or kidneys.

It is found in the secreted. In terms of biological role, tachykinins are active peptides which excite neurons, evoke behavioral responses, are potent vasodilators and secretagogues, and contract (directly or indirectly) many smooth muscles. Substance P produces a voltage-dependent inhibition of calcium current in retinal bipolar cells. It can enhance learning and memory, may regulate social approach and feeding behaviors, and can accelerate the functional recovery in postural balance in response to light after unilateral labyrinthectomy. The polypeptide is Protachykinin (Carassius auratus (Goldfish)).